The primary structure comprises 294 residues: MINGIINLKKEAGMTSHDAVFKLRKLLQEKKIGHGGTLDPDVVGVLPIAVGKATRVIEYMTEAGKVYEGQVTLGYSTTTEDASGEVVARSSLPAVLTEELVDQTMTTFLGKITQTPPMYSAVKVNGRKLYEYARAGESVERPRREVTISLFERTSPLNFTEDGLCRFSFKVACGKGTYVRTLAVDLGRALGVESHMSFLQRSASAGLTLETAYTLGEIADMVSKQEMSFLLPIEYGVADLPKMVIDDTELTEISFGRRLSLPSQEPLLAAFHGEKVIAILEKRDQEYKPKKVLI.

Catalysis depends on D39, which acts as the Nucleophile.

It belongs to the pseudouridine synthase TruB family. Type 1 subfamily.

The catalysed reaction is uridine(55) in tRNA = pseudouridine(55) in tRNA. Functionally, responsible for synthesis of pseudouridine from uracil-55 in the psi GC loop of transfer RNAs. This is tRNA pseudouridine synthase B from Streptococcus pyogenes serotype M3 (strain ATCC BAA-595 / MGAS315).